The sequence spans 704 residues: uncharacterized protein (704 aa).

This is an uncharacterized protein from Rickettsia conorii (strain ATCC VR-613 / Malish 7).